A 123-amino-acid polypeptide reads, in one-letter code: uncharacterized protein (123 aa).

Threonine 56 bears the Phosphothreonine mark. 5 positions are modified to phosphoserine: serine 73, serine 87, serine 97, serine 113, and serine 119.

Highly expressed in the kidney (at protein level).

The protein resides in the cytoplasm. This is an uncharacterized protein from Felis catus (Cat).